Here is a 156-residue protein sequence, read N- to C-terminus: Transcriptional regulator MraZ (156 aa).

2 SpoVT-AbrB domains span residues 5–51 (TFEK…GKAL) and 80–123 (MAKL…SREA).

This sequence belongs to the MraZ family. Forms oligomers.

The protein localises to the cytoplasm. It is found in the nucleoid. This is Transcriptional regulator MraZ from Caulobacter vibrioides (strain ATCC 19089 / CIP 103742 / CB 15) (Caulobacter crescentus).